Consider the following 117-residue polypeptide: Large ribosomal subunit protein bL20c (117 aa).

It belongs to the bacterial ribosomal protein bL20 family.

It localises to the plastid. Its subcellular location is the chloroplast. Functionally, binds directly to 23S ribosomal RNA and is necessary for the in vitro assembly process of the 50S ribosomal subunit. It is not involved in the protein synthesizing functions of that subunit. In Lemna minor (Common duckweed), this protein is Large ribosomal subunit protein bL20c.